A 335-amino-acid chain; its full sequence is MKTYYEKDANVDLLQGKTVAVVGYGSQGHAQAQNLRDSGVEVVVGVRPGKSYEVAKADGFEVMSVSEAVRTAQVVQMLLPDEQQAHVYKAEIEENLREGQMLLFSHGFNIHFGQINPPSYVDVAMVAPKSPGHLVRRVFQEGNGVPALVAVHQDATGTALHVALAYAKGVGCTRAGVIETTFQEETETDLFGEQAVLCGGVTALVKAGFETLTEGGYRPEIAYFECLHELKLIVDLMYEGGLTNMRHSISDTAEFGDYVTGSRIVTDGTKKEMKRVLTEIQQGEFAKKWILENQAGRPTHNAMKKAEQNHGLEKVGAELREMMSWIHAPKELVKK.

Positions 1–180 constitute a KARI N-terminal Rossmann domain; that stretch reads MKTYYEKDAN…GCTRAGVIET (180 aa). NADP(+)-binding positions include 24–27, Arg-47, Ser-51, and 81–84; these read YGSQ and DEQQ. His-106 is a catalytic residue. Gly-132 is a binding site for NADP(+). A KARI C-terminal knotted domain is found at 181-326; sequence TFQEETETDL…AELREMMSWI (146 aa). 4 residues coordinate Mg(2+): Asp-189, Glu-193, Glu-225, and Glu-229. Ser-250 contacts substrate.

The protein belongs to the ketol-acid reductoisomerase family. Requires Mg(2+) as cofactor.

It catalyses the reaction (2R)-2,3-dihydroxy-3-methylbutanoate + NADP(+) = (2S)-2-acetolactate + NADPH + H(+). It carries out the reaction (2R,3R)-2,3-dihydroxy-3-methylpentanoate + NADP(+) = (S)-2-ethyl-2-hydroxy-3-oxobutanoate + NADPH + H(+). The protein operates within amino-acid biosynthesis; L-isoleucine biosynthesis; L-isoleucine from 2-oxobutanoate: step 2/4. Its pathway is amino-acid biosynthesis; L-valine biosynthesis; L-valine from pyruvate: step 2/4. Involved in the biosynthesis of branched-chain amino acids (BCAA). Catalyzes an alkyl-migration followed by a ketol-acid reduction of (S)-2-acetolactate (S2AL) to yield (R)-2,3-dihydroxy-isovalerate. In the isomerase reaction, S2AL is rearranged via a Mg-dependent methyl migration to produce 3-hydroxy-3-methyl-2-ketobutyrate (HMKB). In the reductase reaction, this 2-ketoacid undergoes a metal-dependent reduction by NADPH to yield (R)-2,3-dihydroxy-isovalerate. The polypeptide is Ketol-acid reductoisomerase (NADP(+)) 2 (Bacillus cereus (strain ZK / E33L)).